The primary structure comprises 312 residues: Fasciclin-like arabinogalactan protein elcF (312 aa).

The signal sequence occupies residues 1–16 (MKLFTLLLPALTSAHS). FAS1 domains follow at residues 17–160 (LSTL…NASM) and 162–289 (LPHN…DKVL). Residues asparagine 48, asparagine 68, asparagine 113, asparagine 157, and asparagine 165 are each glycosylated (N-linked (GlcNAc...) asparagine).

Belongs to the fasciclin-like AGP family.

It participates in secondary metabolite biosynthesis. In terms of biological role, fasciclin-like arabinogalactan protein; part of the gene cluster that mediates the biosynthesis of elsinochrome C, a perelyenequinone phytotoxin structurally similar to cercosporin. The first step of elsinochrome C biosynthesis is performed by the polyketide synthase elcA which catalyzes the formation of nor-toralactone. The starter unit acyltransferase (SAT) domain of elcA initiates polyketide extension by the selective utilization of acetyl-CoA, which is elongated to the heptaketide in the beta-ketoacyl synthase (KS) domain by successive condensations with six malonyl units introduced by the malonyl acyltransferase (MAT) domain. The product template (PT) domain catalyzes C4-C9 and C2-C11 aldol cyclizations and dehydrations to a trihydroxynaphthalene, which is thought to be delivered to the thioesterase (TE) domain for product release. The bifunctional enzyme elcB then methylates nor-toralactone to toralactone before conducting an unusual oxidative aromatic ring opening. The next step in perylenequinone biosynthesis is an O-methylation at the nascent OH-6 of the elcB product performed by the O-methyltransferase elcD. The oxidative coupling of the two monomeric naphthol units in perylenequinone biosynthesis is catalyzed by the FAD-dependent monooxygenase elcE and the multicopper oxidase elcG. ElcG might catalyze the first intermolecular coupling in a regio- and stereo-selective manner via a phenol radical coupling mechanism and the elcE could forge the second C-C bond intramolecularly via a hydride transfer mechanism. The fasciclin domain-containing protein elcF might also play a role duting this step. The last piece of the puzzle in the biosynthesis of elsinochrome C is the additional annulation by enolate coupling to afford the dihydrobenzo(ghi)perylenequinone system, catalyzed by the FAD-dependent monooxygenase elcH. This is Fasciclin-like arabinogalactan protein elcF from Phaeosphaeria nodorum (strain SN15 / ATCC MYA-4574 / FGSC 10173) (Glume blotch fungus).